The primary structure comprises 142 residues: Coactosin-like protein (142 aa).

Residue Ala-2 is modified to N-acetylalanine. The region spanning Ala-2–Lys-130 is the ADF-H domain. The flexible and important for F-actin binding stretch occupies residues Thr-66 to Lys-75. Residues Lys-102 and Lys-126 each carry the N6-acetyllysine modification.

It belongs to the actin-binding proteins ADF family. Coactosin subfamily. As to quaternary structure, interacts with 5-lipoxygenase (ALOX5/5LO) in a calcium-independent manner. Binds to F-actin with a stoichiometry of 1:2.

Its subcellular location is the cytoplasm. It is found in the cytoskeleton. It localises to the nucleus. Functionally, binds to F-actin in a calcium-independent manner. Has no direct effect on actin depolymerization. Acts as a chaperone for ALOX5 (5LO), influencing both its stability and activity in leukotrienes synthesis. In Bos taurus (Bovine), this protein is Coactosin-like protein (COTL1).